The chain runs to 607 residues: Discoidin-inducing complex subunit B (607 aa).

The signal sequence occupies residues 1–19 (MNKKIIILIYLIFIKSIVG). The Extracellular segment spans residues 20-554 (QNPVWIGGSG…LGTDGISKGS (535 aa)). 10 N-linked (GlcNAc...) asparagine glycosylation sites follow: N75, N161, N215, N276, N277, N307, N324, N453, N477, and N527. A helical transmembrane segment spans residues 555–575 (LAGISVSMVALACFVSLGVWW). The Cytoplasmic segment spans residues 576–607 (KTSKKNDQRNDSQVLTNFSQNKSDDIDVERKL).

Forms a complex with psiF/dicA.

Its subcellular location is the membrane. It localises to the secreted. In terms of biological role, component of a complex that acts as a quorum sensing protein regulating discoidin gene expression during growth and development. Its function in the complex is unclear as it has no ability to induce discoidin during growth and development by itself. This is Discoidin-inducing complex subunit B (dicB) from Dictyostelium discoideum (Social amoeba).